Reading from the N-terminus, the 129-residue chain is Ribulose bisphosphate carboxylase small subunit (129 aa).

The interval Leu-109 to Arg-129 is disordered.

The protein belongs to the RuBisCO small chain family. In terms of assembly, heterohexadecamer of 8 large and 8 small subunits.

In terms of biological role, ruBisCO catalyzes two reactions: the carboxylation of D-ribulose 1,5-bisphosphate, the primary event in carbon dioxide fixation, as well as the oxidative fragmentation of the pentose substrate. Both reactions occur simultaneously and in competition at the same active site. Although the small subunit is not catalytic it is essential for maximal activity. This Rhizobium meliloti (strain 1021) (Ensifer meliloti) protein is Ribulose bisphosphate carboxylase small subunit.